The primary structure comprises 246 residues: UDP-N-acetyl-D-mannosaminuronic acid transferase (246 aa).

Belongs to the glycosyltransferase 26 family.

The enzyme catalyses UDP-N-acetyl-alpha-D-mannosaminouronate + N-acetyl-alpha-D-glucosaminyl-di-trans,octa-cis-undecaprenyl diphosphate = beta-D-ManNAcA-(1-&gt;4)-alpha-D-GlcNAc-di-trans,octa-cis-undecaprenyl diphosphate + UDP + H(+). It functions in the pathway bacterial outer membrane biogenesis; enterobacterial common antigen biosynthesis. Catalyzes the synthesis of Und-PP-GlcNAc-ManNAcA (Lipid II), the second lipid-linked intermediate involved in enterobacterial common antigen (ECA) synthesis. This chain is UDP-N-acetyl-D-mannosaminuronic acid transferase, found in Salmonella dublin (strain CT_02021853).